We begin with the raw amino-acid sequence, 132 residues long: Small ribosomal subunit protein uS8 (132 aa).

The protein belongs to the universal ribosomal protein uS8 family. In terms of assembly, part of the 30S ribosomal subunit. Contacts proteins S5 and S12.

Functionally, one of the primary rRNA binding proteins, it binds directly to 16S rRNA central domain where it helps coordinate assembly of the platform of the 30S subunit. This chain is Small ribosomal subunit protein uS8, found in Psychrobacter arcticus (strain DSM 17307 / VKM B-2377 / 273-4).